Reading from the N-terminus, the 142-residue chain is MPTPSMEDYIEQIYLLIDEKGYARVSDIAEALSVHPSSVTKMVQKLDKDEYLIYEKYRGLVLTSKGKKIGERLVYRHELLEQFMRIIGVDESKIYNDVEGIEHHLSWESIDRIGDLVQYFEQDEVRVKTLRGVQKANEEKSN.

Residues 1-63 form the HTH dtxR-type domain; sequence MPTPSMEDYI…YEKYRGLVLT (63 aa). Residues D8, E11, H77, E99, E102, and H103 each contribute to the Mn(2+) site.

Belongs to the DtxR/MntR family. As to quaternary structure, homodimer.

The protein localises to the cytoplasm. DNA binding is strongly activated by Mn(2+). Central regulator of manganese homeostasis. The polypeptide is HTH-type transcriptional regulator MntR (Bacillus mycoides (strain KBAB4) (Bacillus weihenstephanensis)).